We begin with the raw amino-acid sequence, 875 residues long: Kelch-like protein 29 (875 aa).

The segment covering 113–126 has biased composition (polar residues); sequence IRWGQTPVNQSTPW. 2 disordered regions span residues 113–145 and 240–291; these read IRWG…PGTG and GVGQ…DSAH. Over residues 131-140 the composition is skewed to basic and acidic residues; sequence PPSKQMRESD. Positions 270 to 280 are enriched in low complexity; the sequence is PSAALPSSVPA. Residues 329–401 form the BTB domain; sequence TDLKIVVEGR…VYTGSLVIDS (73 aa). 6 Kelch repeats span residues 585–635, 637–683, 684–730, 732–778, 779–821, and 822–870; these read VIVL…VSAG, NIYL…VYDG, KIYT…VCGG, IYVF…TLNG, FVFI…VLDG, and KIYA…VIKK.

The sequence is that of Kelch-like protein 29 (Klhl29) from Mus musculus (Mouse).